The primary structure comprises 149 residues: Transcriptional repressor NrdR (149 aa).

A zinc finger spans residues 3 to 34 (CPFCGFEESKVVDSRSTDDNTTIRRRRECLKC). The 91-residue stretch at 49 to 139 (ILVIKKDLTR…VYRQFKDIDT (91 aa)) folds into the ATP-cone domain.

This sequence belongs to the NrdR family. Zn(2+) is required as a cofactor.

Negatively regulates transcription of bacterial ribonucleotide reductase nrd genes and operons by binding to NrdR-boxes. The protein is Transcriptional repressor NrdR of Clostridium beijerinckii (strain ATCC 51743 / NCIMB 8052) (Clostridium acetobutylicum).